Reading from the N-terminus, the 1170-residue chain is PAN2-PAN3 deadenylation complex catalytic subunit PAN2 (1170 aa).

WD repeat units lie at residues 104–144 (ENMK…IIKQ) and 280–319 (NISS…HFTD). A linker region spans residues 319–458 (DMAIPIELPE…DPNEIESLKP (140 aa)). The tract at residues 399 to 459 (RRNQVEDTRN…PNEIESLKPE (61 aa)) is disordered. Residues 443–452 (VDQEPEDPNE) show a composition bias toward acidic residues. The 388-residue stretch at 459 to 846 (EAPPLYRNLE…MPAVLLFQIK (388 aa)) folds into the USP domain. Residues 894-1067 (VALDTEFVSL…EDARTALKLY (174 aa)) enclose the Exonuclease domain. A divalent metal cation contacts are provided by Asp897, Glu899, Asp1006, and Asp1059. The interval 1094–1170 (NFKPPRREDR…PSKASSPLPK (77 aa)) is disordered. Basic and acidic residues predominate over residues 1098 to 1108 (PRREDREKELQ). The span at 1109–1119 (RQSTPPNSTAP) shows a compositional bias: polar residues.

The protein belongs to the peptidase C19 family. PAN2 subfamily. In terms of assembly, forms a heterotrimer with an asymmetric homodimer of the regulatory subunit PAN3 to form the poly(A)-nuclease (PAN) deadenylation complex. A divalent metal cation is required as a cofactor.

It localises to the cytoplasm. The catalysed reaction is Exonucleolytic cleavage of poly(A) to 5'-AMP.. Positively regulated by the regulatory subunit PAN3. Catalytic subunit of the poly(A)-nuclease (PAN) deadenylation complex, one of two cytoplasmic mRNA deadenylases involved in mRNA turnover. PAN specifically shortens poly(A) tails of RNA and the activity is stimulated by poly(A)-binding protein PAB1. PAN deadenylation is followed by rapid degradation of the shortened mRNA tails by the CCR4-NOT complex. Deadenylated mRNAs are then degraded by two alternative mechanisms, namely exosome-mediated 3'-5' exonucleolytic degradation, or deadenylation-dependent mRNA decaping and subsequent 5'-3' exonucleolytic degradation by XRN1. May also be involved in post-transcriptional maturation of mRNA poly(A) tails. In Chaetomium thermophilum (strain DSM 1495 / CBS 144.50 / IMI 039719) (Thermochaetoides thermophila), this protein is PAN2-PAN3 deadenylation complex catalytic subunit PAN2.